The chain runs to 142 residues: Large ribosomal subunit protein uL11 (142 aa).

It belongs to the universal ribosomal protein uL11 family. In terms of assembly, part of the ribosomal stalk of the 50S ribosomal subunit. Interacts with L10 and the large rRNA to form the base of the stalk. L10 forms an elongated spine to which L12 dimers bind in a sequential fashion forming a multimeric L10(L12)X complex. One or more lysine residues are methylated.

Functionally, forms part of the ribosomal stalk which helps the ribosome interact with GTP-bound translation factors. The protein is Large ribosomal subunit protein uL11 of Desulforudis audaxviator (strain MP104C).